A 319-amino-acid chain; its full sequence is HPr kinase/phosphorylase (319 aa).

Catalysis depends on residues His-146 and Lys-167. ATP is bound at residue Gly-161 to Ser-168. Ser-168 provides a ligand contact to Mg(2+). Asp-185 acts as the Proton acceptor; for phosphorylation activity. Proton donor; for dephosphorylation activity in catalysis. The important for the catalytic mechanism of both phosphorylation and dephosphorylation stretch occupies residues Leu-209 to Asp-218. Glu-210 lines the Mg(2+) pocket. Arg-252 is a catalytic residue. Residues Gln-273 to Arg-278 form an important for the catalytic mechanism of dephosphorylation region.

It belongs to the HPrK/P family. As to quaternary structure, homohexamer. It depends on Mg(2+) as a cofactor.

It carries out the reaction [HPr protein]-L-serine + ATP = [HPr protein]-O-phospho-L-serine + ADP + H(+). The catalysed reaction is [HPr protein]-O-phospho-L-serine + phosphate + H(+) = [HPr protein]-L-serine + diphosphate. Its function is as follows. Catalyzes the ATP- as well as the pyrophosphate-dependent phosphorylation of a specific serine residue in HPr, a phosphocarrier protein of the phosphoenolpyruvate-dependent sugar phosphotransferase system (PTS). HprK/P also catalyzes the pyrophosphate-producing, inorganic phosphate-dependent dephosphorylation (phosphorolysis) of seryl-phosphorylated HPr (P-Ser-HPr). The sequence is that of HPr kinase/phosphorylase from Variovorax paradoxus (strain S110).